A 904-amino-acid chain; its full sequence is Translation initiation factor IF-2 (904 aa).

The segment at 239 to 316 is disordered; it reads QAATQAKTSE…DDGQGSFQAP (78 aa). Over residues 248–278 the composition is skewed to basic and acidic residues; sequence EGAEKGTLHKKPETPGKKGDKGGRAADDGKK. The tr-type G domain occupies 404–571; that stretch reads HRAPVVTVMG…QVLLQAEILE (168 aa). Residues 413 to 420 form a G1 region; the sequence is GHVDHGKT. 413-420 contacts GTP; that stretch reads GHVDHGKT. The tract at residues 438-442 is G2; that stretch reads GITQH. The segment at 459-462 is G3; the sequence is DTPG. Residues 459–463 and 513–516 each bind GTP; these read DTPGH and NKID. The G4 stretch occupies residues 513–516; sequence NKID. The interval 549–551 is G5; it reads SAK.

This sequence belongs to the TRAFAC class translation factor GTPase superfamily. Classic translation factor GTPase family. IF-2 subfamily.

Its subcellular location is the cytoplasm. One of the essential components for the initiation of protein synthesis. Protects formylmethionyl-tRNA from spontaneous hydrolysis and promotes its binding to the 30S ribosomal subunits. Also involved in the hydrolysis of GTP during the formation of the 70S ribosomal complex. This Dechloromonas aromatica (strain RCB) protein is Translation initiation factor IF-2.